Consider the following 77-residue polypeptide: Acyl carrier protein (77 aa).

The 76-residue stretch at 1–76 (MADFEKIKSI…DVIKFIDKLK (76 aa)) folds into the Carrier domain. An O-(pantetheine 4'-phosphoryl)serine modification is found at S36.

It belongs to the acyl carrier protein (ACP) family. In terms of processing, 4'-phosphopantetheine is transferred from CoA to a specific serine of apo-ACP by AcpS. This modification is essential for activity because fatty acids are bound in thioester linkage to the sulfhydryl of the prosthetic group.

Its subcellular location is the cytoplasm. It functions in the pathway lipid metabolism; fatty acid biosynthesis. In terms of biological role, carrier of the growing fatty acid chain in fatty acid biosynthesis. The protein is Acyl carrier protein of Leptospira biflexa serovar Patoc (strain Patoc 1 / Ames).